The chain runs to 328 residues: MPSANVSPPCPSGVRGGGMGPKAKAEASKPHPQIPVKLPFVTAPDALAAAKARMRDLAAAYVAALPGRDTHSLMAGVPGVDLKFMPLGWRDGAFDPEHNVILINSAARPERQRFTLAHEIGHAILLGDDDLLSDIHDAYEGERLEQVIETLCNVAAAAILMPEPVIAEMLERFGPTGRALAELAKRAEVSASSALYALTEQTPVPVIYAVCAPGKPPREQAASDEDAGPSTEKVLTVRASSSTRGVKYTLASGTPVPADHPAALALATGMEVREESYVPFRSGRKMKAEVDAYPSRGIVAVSFEFDPARLGRKDSEQADRDEPQDAAQ.

The segment at 1-31 (MPSANVSPPCPSGVRGGGMGPKAKAEASKPH) is disordered. Residue H118 participates in Zn(2+) binding. E119 is a catalytic residue. Residues H122 and E149 each contribute to the Zn(2+) site. Disordered regions lie at residues 217 to 238 (PREQ…LTVR) and 309 to 328 (RLGR…DAAQ).

Functionally, plays a central regulatory role in DNA repair and protection pathways in response to radiation stress. Acts as a site-specific metalloprotease that cleaves and inactivates the repressor protein DdrO, resulting in induced expression of genes required for DNA repair and cell survival after exposure to radiation. Regulates the expression of dozens of proteins from different pathways, including the important DNA repair proteins RecA and PprA. Binds to the promoters of recA and pprA. This is Radiation response metalloprotease IrrE from Deinococcus radiodurans (strain ATCC 13939 / DSM 20539 / JCM 16871 / CCUG 27074 / LMG 4051 / NBRC 15346 / NCIMB 9279 / VKM B-1422 / R1).